Consider the following 125-residue polypeptide: Glycine cleavage system H protein (125 aa).

The Lipoyl-binding domain occupies S22 to E104. K63 carries the post-translational modification N6-lipoyllysine.

The protein belongs to the GcvH family. In terms of assembly, the glycine cleavage system is composed of four proteins: P, T, L and H. (R)-lipoate is required as a cofactor.

In terms of biological role, the glycine cleavage system catalyzes the degradation of glycine. The H protein shuttles the methylamine group of glycine from the P protein to the T protein. Its function is as follows. Is also involved in protein lipoylation via its role as an octanoyl/lipoyl carrier protein intermediate. The sequence is that of Glycine cleavage system H protein from Listeria monocytogenes serotype 4a (strain HCC23).